The chain runs to 114 residues: Translation initiation factor 1A (114 aa).

The 73-residue stretch at 19–91 (SEFRLPGEGE…EKGDIVHKYE (73 aa)) folds into the S1-like domain.

Belongs to the eIF-1A family.

Its function is as follows. Seems to be required for maximal rate of protein biosynthesis. Enhances ribosome dissociation into subunits and stabilizes the binding of the initiator Met-tRNA(I) to 40 S ribosomal subunits. The chain is Translation initiation factor 1A (eIF1A) from Pyrobaculum aerophilum (strain ATCC 51768 / DSM 7523 / JCM 9630 / CIP 104966 / NBRC 100827 / IM2).